A 126-amino-acid chain; its full sequence is Fatty acid-binding protein, liver (126 aa).

A2 bears the N-acetylalanine mark. Cholate-binding residues include K77, H99, and Q101.

Belongs to the calycin superfamily. Fatty-acid binding protein (FABP) family.

It localises to the cytoplasm. Binds free fatty acids and their coenzyme A derivatives, bilirubin, and some other small molecules in the cytoplasm. May be involved in intracellular lipid transport. This Aquarana catesbeiana (American bullfrog) protein is Fatty acid-binding protein, liver (fabp1).